The following is a 371-amino-acid chain: Integrator complex assembly factor WDR73 (371 aa).

3 WD repeats span residues 81 to 121, 273 to 313, and 333 to 371; these read FSDR…DVIE, SPDP…GKKT, and DSAPLVTTHTWHPRKPRTLLSAASDSSLHVWDWVDLQAS.

It belongs to the WD repeat WDR73 family. As to quaternary structure, interacts with INTS9 and INTS11; the interaction is direct. Part of the multiprotein complex composed of BRAT1, WDR73, as well as integrator complex subunits INTS9 and INTS11.

It is found in the cytoplasm. Its subcellular location is the cytoskeleton. The protein localises to the spindle. It localises to the spindle pole. The protein resides in the cleavage furrow. Component of a multiprotein complex required for the assembly of the RNA endonuclease module of the integrator complex. Associates with INTS9 and INTS11 in the cytoplasm, stabilizing the INTS9-INTS11 heterodimer and blocking the active site of INTS11. BRAT1 then joins the complex and plugs the active site of INTS11, leading to WDR73 release and nuclear import of INTS9 and INTS11. The chain is Integrator complex assembly factor WDR73 (Wdr73) from Mus musculus (Mouse).